We begin with the raw amino-acid sequence, 647 residues long: Nucleoside triphosphatase I (647 aa).

One can recognise a Helicase ATP-binding domain in the interval 48–212 (FIGLKNLNSM…NNLIGLLRPN (165 aa)). ATP is bound at residue 61–68 (WDTGTGKT). The DEXH box signature appears at 150 to 153 (DEVH). The region spanning 378-541 (YIEACRIILN…KINVVFDLLK (164 aa)) is the Helicase C-terminal domain. Residues 467-533 (DIIILDMPWN…DIIKNKQGKI (67 aa)) form a binding to the cap-specific mRNA (nucleoside-2'-O-)-methyltransferase region.

The protein belongs to the helicase family. NPH I subfamily. As to quaternary structure, monomer. Interacts (via C-terminus) with RAP94 (via N-terminus). Interacts with the cap-specific mRNA (nucleoside-2'-O-)-methyltransferase.

The protein localises to the virion. It catalyses the reaction a ribonucleoside 5'-triphosphate + H2O = a ribonucleoside 5'-diphosphate + phosphate + H(+). Its function is as follows. DNA-dependent ATPase required for providing the needed energy to achieve the termination of early transcripts. Acts in concert with the RAP94 subunit of the virion RNA polymerase and the capping enzyme/VTF to catalyze release of UUUUUNU-containing nascent RNA from the elongation complex. NPH-I must bind ssDNA in order to exhibit ATPase activity. The sequence is that of Nucleoside triphosphatase I (NPH1) from Choristoneura fumiferana (Spruce budworm moth).